The sequence spans 159 residues: Siroheme decarboxylase beta subunit (159 aa).

A substrate-binding site is contributed by 152 to 157; the sequence is KTSMTY.

It belongs to the Ahb/Nir family. Forms a heterodimer composed of AhbA and AhbB.

The catalysed reaction is siroheme + 2 H(+) = 12,18-didecarboxysiroheme + 2 CO2. It participates in porphyrin-containing compound metabolism; protoheme biosynthesis. In terms of biological role, involved in siroheme-dependent heme b biosynthesis. Catalyzes the decarboxylation of siroheme into didecarboxysiroheme. Siroheme is decarboxylated to monodecarboxysiroheme, which is in turn decarboxylated to didecarboxysiroheme. This Desulfovibrio desulfuricans (strain ATCC 27774 / DSM 6949 / MB) protein is Siroheme decarboxylase beta subunit.